The chain runs to 27 residues: DVPSANANANNQRTAAAKPQANAEASS.

Residues 1-17 (DVPSANANANNQRTAAA) show a composition bias toward low complexity. The segment at 1–27 (DVPSANANANNQRTAAAKPQANAEASS) is disordered.

Main cells of the accessory glands of males (paragonial gland).

The protein localises to the secreted. In terms of biological role, represses female sexual receptivity and stimulates oviposition. This peptide has a low activity. The sequence is that of Paragonial peptide PS-1 (PapC) from Drosophila funebris (Fruit fly).